The following is a 211-amino-acid chain: Thymidylate kinase (211 aa).

Residue 7 to 14 coordinates ATP; the sequence is GIDASGKS.

It belongs to the thymidylate kinase family.

It carries out the reaction dTMP + ATP = dTDP + ADP. Phosphorylation of dTMP to form dTDP in both de novo and salvage pathways of dTTP synthesis. The sequence is that of Thymidylate kinase from Mesomycoplasma hyopneumoniae (strain 7448) (Mycoplasma hyopneumoniae).